A 337-amino-acid chain; its full sequence is UDP-3-O-acylglucosamine N-acyltransferase (337 aa).

Catalysis depends on His238, which acts as the Proton acceptor.

Belongs to the transferase hexapeptide repeat family. LpxD subfamily. Homotrimer.

The catalysed reaction is a UDP-3-O-[(3R)-3-hydroxyacyl]-alpha-D-glucosamine + a (3R)-hydroxyacyl-[ACP] = a UDP-2-N,3-O-bis[(3R)-3-hydroxyacyl]-alpha-D-glucosamine + holo-[ACP] + H(+). It participates in bacterial outer membrane biogenesis; LPS lipid A biosynthesis. Functionally, catalyzes the N-acylation of UDP-3-O-acylglucosamine using 3-hydroxyacyl-ACP as the acyl donor. Is involved in the biosynthesis of lipid A, a phosphorylated glycolipid that anchors the lipopolysaccharide to the outer membrane of the cell. The chain is UDP-3-O-acylglucosamine N-acyltransferase from Xanthomonas campestris pv. campestris (strain 8004).